A 288-amino-acid polypeptide reads, in one-letter code: Lipoyl synthase (288 aa).

Residues C39, C44, C50, C65, C69, C72, and S276 each contribute to the [4Fe-4S] cluster site. Residues 51-265 (WGKGTATFMI…KETGLKKGFE (215 aa)) enclose the Radical SAM core domain.

This sequence belongs to the radical SAM superfamily. Lipoyl synthase family. It depends on [4Fe-4S] cluster as a cofactor.

It is found in the cytoplasm. It carries out the reaction [[Fe-S] cluster scaffold protein carrying a second [4Fe-4S](2+) cluster] + N(6)-octanoyl-L-lysyl-[protein] + 2 oxidized [2Fe-2S]-[ferredoxin] + 2 S-adenosyl-L-methionine + 4 H(+) = [[Fe-S] cluster scaffold protein] + N(6)-[(R)-dihydrolipoyl]-L-lysyl-[protein] + 4 Fe(3+) + 2 hydrogen sulfide + 2 5'-deoxyadenosine + 2 L-methionine + 2 reduced [2Fe-2S]-[ferredoxin]. The protein operates within protein modification; protein lipoylation via endogenous pathway; protein N(6)-(lipoyl)lysine from octanoyl-[acyl-carrier-protein]: step 2/2. Functionally, catalyzes the radical-mediated insertion of two sulfur atoms into the C-6 and C-8 positions of the octanoyl moiety bound to the lipoyl domains of lipoate-dependent enzymes, thereby converting the octanoylated domains into lipoylated derivatives. The chain is Lipoyl synthase from Bacteroides fragilis (strain ATCC 25285 / DSM 2151 / CCUG 4856 / JCM 11019 / LMG 10263 / NCTC 9343 / Onslow / VPI 2553 / EN-2).